The sequence spans 151 residues: NADPH-dependent 7-cyano-7-deazaguanine reductase (151 aa).

Cys51 functions as the Thioimide intermediate in the catalytic mechanism. The Proton donor role is filled by Asp58. Substrate-binding positions include 73 to 75 and 92 to 93; these read VES and HE.

This sequence belongs to the GTP cyclohydrolase I family. QueF type 1 subfamily.

It localises to the cytoplasm. The catalysed reaction is 7-aminomethyl-7-carbaguanine + 2 NADP(+) = 7-cyano-7-deazaguanine + 2 NADPH + 3 H(+). Its pathway is tRNA modification; tRNA-queuosine biosynthesis. In terms of biological role, catalyzes the NADPH-dependent reduction of 7-cyano-7-deazaguanine (preQ0) to 7-aminomethyl-7-deazaguanine (preQ1). The chain is NADPH-dependent 7-cyano-7-deazaguanine reductase from Bacteroides fragilis (strain ATCC 25285 / DSM 2151 / CCUG 4856 / JCM 11019 / LMG 10263 / NCTC 9343 / Onslow / VPI 2553 / EN-2).